The primary structure comprises 174 residues: Ubiquinone biosynthesis accessory factor UbiT (174 aa).

The 89-residue stretch at L45 to D133 folds into the SCP2 domain.

It belongs to the UbiT family.

It functions in the pathway cofactor biosynthesis; ubiquinone biosynthesis. Functionally, required for O(2)-independent ubiquinone (coenzyme Q) biosynthesis. Likely functions as an accessory factor. The chain is Ubiquinone biosynthesis accessory factor UbiT from Escherichia coli O157:H7.